The sequence spans 123 residues: Ribonuclease P protein component (123 aa).

The protein belongs to the RnpA family. Consists of a catalytic RNA component (M1 or rnpB) and a protein subunit.

It carries out the reaction Endonucleolytic cleavage of RNA, removing 5'-extranucleotides from tRNA precursor.. RNaseP catalyzes the removal of the 5'-leader sequence from pre-tRNA to produce the mature 5'-terminus. It can also cleave other RNA substrates such as 4.5S RNA. The protein component plays an auxiliary but essential role in vivo by binding to the 5'-leader sequence and broadening the substrate specificity of the ribozyme. This chain is Ribonuclease P protein component, found in Streptococcus pneumoniae serotype 4 (strain ATCC BAA-334 / TIGR4).